The primary structure comprises 37 residues: Photosystem II reaction center protein Psb30 (37 aa).

A helical transmembrane segment spans residues Leu-10–Trp-30.

The protein belongs to the Psb30/Ycf12 family. As to quaternary structure, PSII is composed of 1 copy each of membrane proteins PsbA, PsbB, PsbC, PsbD, PsbE, PsbF, PsbH, PsbI, PsbJ, PsbK, PsbL, PsbM, PsbT, PsbX, Psb30/Ycf12, peripheral proteins PsbO, CyanoQ (PsbQ), PsbU, PsbV and a large number of cofactors. It forms dimeric complexes.

The protein localises to the cell inner membrane. In terms of biological role, a core subunit of photosystem II (PSII), probably helps stabilize the reaction center. This is Photosystem II reaction center protein Psb30 from Gloeobacter violaceus (strain ATCC 29082 / PCC 7421).